The following is a 329-amino-acid chain: Gibberellin 2-beta-dioxygenase 1 (329 aa).

The 109-residue stretch at 165-273 folds into the Fe2OG dioxygenase domain; it reads NTDSILRLNH…RVSMIYFAGP (109 aa). Fe cation is bound by residues His-197, Asp-199, and His-254. Arg-264 is a catalytic residue. Arg-264 contacts 2-oxoglutarate.

Belongs to the iron/ascorbate-dependent oxidoreductase family. GA2OX subfamily. The cofactor is Fe(2+). As to expression, preferentially expressed in flowers, siliques, and upper stems. Not expressed in the apex.

It carries out the reaction gibberellin A1 + 2-oxoglutarate + O2 = gibberellin A8 + succinate + CO2. It functions in the pathway plant hormone biosynthesis; gibberellin biosynthesis. Its function is as follows. Catalyzes the 2-beta-hydroxylation of several biologically active gibberellins, leading to the homeostatic regulation of their endogenous level. Catabolism of gibberellins (GAs) plays a central role in plant development. Converts GA9/GA20 to GA51/GA29 and GA4/GA1 to GA34/GA8. This chain is Gibberellin 2-beta-dioxygenase 1 (GA2OX1), found in Arabidopsis thaliana (Mouse-ear cress).